Here is a 43-residue protein sequence, read N- to C-terminus: Jararafibrase-3 (43 aa).

The region spanning 10–43 (MNGLYYKIFDELKAWKDAEMFCRKYKPGWHLASF) is the C-type lectin domain.

Belongs to the true venom lectin family. As to quaternary structure, monomer. As to expression, expressed by the venom gland.

The protein localises to the secreted. Inhibited by 1,10-phenanthroline and EDTA. Its function is as follows. May have both metalloproteinase and lectin activities. Induces local hemorrhage in the skin of rats. Degrades type-IV collagen, gelatin, laminin and fibronectin. Has hemagglutinating activity on red blood cells. The protein is Jararafibrase-3 of Bothrops jararaca (Jararaca).